Reading from the N-terminus, the 463-residue chain is Retinoic acid receptor RXR-gamma (463 aa).

Residues 1–138 (MYGNYSHFMK…TSPGSLVKHI (138 aa)) form a modulating region. The interval 18–53 (SPGHTGSTSMSPSAALSTGKPMDSHPSYTDTPVSAP) is disordered. Polar residues predominate over residues 21–33 (HTGSTSMSPSAAL). The nuclear receptor DNA-binding region spans 136-211 (KHICAICGDR…MGMKREAVQE (76 aa)). 2 NR C4-type zinc fingers span residues 139–159 (CAICGDRSSGKHYGVYSCEGC) and 175–199 (CRDNKDCLIDKRQRNRCQYCRYQKC). Residues 205 to 230 (KREAVQEERQRSRERAESEAECATSG) are hinge. The region spanning 231–459 (HEDMPVERIL…TFLMEMLETP (229 aa)) is the NR LBD domain.

It belongs to the nuclear hormone receptor family. NR2 subfamily. In terms of assembly, homodimer. Heterodimer with a RAR molecule. Binds DNA preferentially as a RAR/RXR heterodimer. Interacts with RARA. Acetylated by EP300. As to expression, expressed in aortic endothelial cells (at protein level).

It is found in the nucleus. The protein localises to the cytoplasm. Receptor for retinoic acid. Retinoic acid receptors bind as heterodimers to their target response elements in response to their ligands, all-trans or 9-cis retinoic acid, and regulate gene expression in various biological processes. The RAR/RXR heterodimers bind to the retinoic acid response elements (RARE) composed of tandem 5'-AGGTCA-3' sites known as DR1-DR5. The high affinity ligand for RXRs is 9-cis retinoic acid. This Homo sapiens (Human) protein is Retinoic acid receptor RXR-gamma (RXRG).